A 323-amino-acid chain; its full sequence is tRNA U34 carboxymethyltransferase (323 aa).

Carboxy-S-adenosyl-L-methionine is bound by residues Lys91, Trp105, Lys110, Gly130, 152-154 (DPT), 181-182 (IE), Met196, Tyr200, and Arg315.

The protein belongs to the class I-like SAM-binding methyltransferase superfamily. CmoB family. In terms of assembly, homotetramer.

The catalysed reaction is carboxy-S-adenosyl-L-methionine + 5-hydroxyuridine(34) in tRNA = 5-carboxymethoxyuridine(34) in tRNA + S-adenosyl-L-homocysteine + H(+). Catalyzes carboxymethyl transfer from carboxy-S-adenosyl-L-methionine (Cx-SAM) to 5-hydroxyuridine (ho5U) to form 5-carboxymethoxyuridine (cmo5U) at position 34 in tRNAs. The polypeptide is tRNA U34 carboxymethyltransferase (Salmonella arizonae (strain ATCC BAA-731 / CDC346-86 / RSK2980)).